Consider the following 322-residue polypeptide: Acetyl-coenzyme A carboxylase carboxyl transferase subunit alpha (322 aa).

A CoA carboxyltransferase C-terminal domain is found at 39-293 (RLAAKSQQLT…KRALAESLRQ (255 aa)).

Belongs to the AccA family. In terms of assembly, acetyl-CoA carboxylase is a heterohexamer composed of biotin carboxyl carrier protein (AccB), biotin carboxylase (AccC) and two subunits each of ACCase subunit alpha (AccA) and ACCase subunit beta (AccD).

The protein localises to the cytoplasm. It catalyses the reaction N(6)-carboxybiotinyl-L-lysyl-[protein] + acetyl-CoA = N(6)-biotinyl-L-lysyl-[protein] + malonyl-CoA. It participates in lipid metabolism; malonyl-CoA biosynthesis; malonyl-CoA from acetyl-CoA: step 1/1. Its function is as follows. Component of the acetyl coenzyme A carboxylase (ACC) complex. First, biotin carboxylase catalyzes the carboxylation of biotin on its carrier protein (BCCP) and then the CO(2) group is transferred by the carboxyltransferase to acetyl-CoA to form malonyl-CoA. This chain is Acetyl-coenzyme A carboxylase carboxyl transferase subunit alpha, found in Ralstonia nicotianae (strain ATCC BAA-1114 / GMI1000) (Ralstonia solanacearum).